The following is a 743-amino-acid chain: Phosphoribosylformylglycinamidine synthase subunit PurL (743 aa).

His53 is a catalytic residue. Positions 56 and 95 each coordinate ATP. A Mg(2+)-binding site is contributed by Glu97. Substrate-binding positions include 98–101 and Arg120; that span reads SHNH. His99 serves as the catalytic Proton acceptor. A Mg(2+)-binding site is contributed by Asp121. Gln245 serves as a coordination point for substrate. Asp275 is a Mg(2+) binding site. 319 to 321 provides a ligand contact to substrate; that stretch reads ESQ. Residues Asp502 and Gly539 each coordinate ATP. Position 540 (Asn540) interacts with Mg(2+). Ser542 contributes to the substrate binding site.

The protein belongs to the FGAMS family. Monomer. Part of the FGAM synthase complex composed of 1 PurL, 1 PurQ and 2 PurS subunits.

It is found in the cytoplasm. It catalyses the reaction N(2)-formyl-N(1)-(5-phospho-beta-D-ribosyl)glycinamide + L-glutamine + ATP + H2O = 2-formamido-N(1)-(5-O-phospho-beta-D-ribosyl)acetamidine + L-glutamate + ADP + phosphate + H(+). It functions in the pathway purine metabolism; IMP biosynthesis via de novo pathway; 5-amino-1-(5-phospho-D-ribosyl)imidazole from N(2)-formyl-N(1)-(5-phospho-D-ribosyl)glycinamide: step 1/2. Part of the phosphoribosylformylglycinamidine synthase complex involved in the purines biosynthetic pathway. Catalyzes the ATP-dependent conversion of formylglycinamide ribonucleotide (FGAR) and glutamine to yield formylglycinamidine ribonucleotide (FGAM) and glutamate. The FGAM synthase complex is composed of three subunits. PurQ produces an ammonia molecule by converting glutamine to glutamate. PurL transfers the ammonia molecule to FGAR to form FGAM in an ATP-dependent manner. PurS interacts with PurQ and PurL and is thought to assist in the transfer of the ammonia molecule from PurQ to PurL. This chain is Phosphoribosylformylglycinamidine synthase subunit PurL, found in Lactobacillus helveticus (strain DPC 4571).